The chain runs to 394 residues: Flavohemoprotein (394 aa).

Residues 1–138 (MLTQEHINII…LAQVFIDREG (138 aa)) enclose the Globin domain. Position 85 (histidine 85) interacts with heme b. Active-site charge relay system residues include tyrosine 95 and glutamate 137. The interval 149–394 (GGWRDGRTFV…VFGPHAQLAA (246 aa)) is reductase. An FAD-binding FR-type domain is found at 152-262 (RDGRTFVVRE…YAPAGDFFYV (111 aa)). Residues tyrosine 190 and 206 to 209 (RQYS) contribute to the FAD site. 274 to 279 (GVGATP) provides a ligand contact to NADP(+). 385–388 (VFGP) is an FAD binding site.

It belongs to the globin family. Two-domain flavohemoproteins subfamily. This sequence in the C-terminal section; belongs to the flavoprotein pyridine nucleotide cytochrome reductase family. It depends on heme b as a cofactor. Requires FAD as cofactor.

The enzyme catalyses 2 nitric oxide + NADPH + 2 O2 = 2 nitrate + NADP(+) + H(+). It carries out the reaction 2 nitric oxide + NADH + 2 O2 = 2 nitrate + NAD(+) + H(+). In terms of biological role, is involved in NO detoxification in an aerobic process, termed nitric oxide dioxygenase (NOD) reaction that utilizes O(2) and NAD(P)H to convert NO to nitrate, which protects the bacterium from various noxious nitrogen compounds. Therefore, plays a central role in the inducible response to nitrosative stress. This Vibrio cholerae serotype O1 (strain ATCC 39315 / El Tor Inaba N16961) protein is Flavohemoprotein (hmp).